A 177-amino-acid chain; its full sequence is Large ribosomal subunit protein uL6 (177 aa).

Belongs to the universal ribosomal protein uL6 family. Part of the 50S ribosomal subunit.

Functionally, this protein binds to the 23S rRNA, and is important in its secondary structure. It is located near the subunit interface in the base of the L7/L12 stalk, and near the tRNA binding site of the peptidyltransferase center. The polypeptide is Large ribosomal subunit protein uL6 (Rickettsia prowazekii (strain Madrid E)).